Consider the following 928-residue polypeptide: Diacylglycerol kinase zeta (928 aa).

Over residues M1–D14 the composition is skewed to basic and acidic residues. 2 disordered regions span residues M1–P46 and K59–Q82. The segment covering S15–G24 has biased composition (low complexity). Over residues S25–P37 the composition is skewed to basic and acidic residues. Phorbol-ester/DAG-type zinc fingers lie at residues H98–C152 and H172–C230. The segment at P251–W280 is disordered. Basic residues predominate over residues A257–K272. The tract at residues K259–K273 is MARCKS homology. Residues G278–L416 are mediates interaction with RASGRP1. Positions P291 to P425 constitute a DAGKc domain. The Nuclear export signal motif lies at L361 to L369. The residue at position 705 (S705) is a Phosphoserine. Positions A759–P788 are disordered. Positions L763 to P777 are enriched in pro residues. Position 781 is a phosphoserine (S781). ANK repeat units lie at residues Q822–D852 and N857–K886. Residues Q924–V928 carry the PDZ-binding motif.

The protein belongs to the eukaryotic diacylglycerol kinase family. As to quaternary structure, interacts (via PDZ-binding motif) with the PDZ domain of the syntrophin SNTG1 and that of SNX27. Interacts with IRS1 in the absence of insulin; insulin stimulation decreases this interaction. Found in a ternary complex with IRS1 and PIP5K1A in the absence of insulin. Interacts with PIP5K1A. Forms a signaling complex with RASGRP1 and HRAS. Phosphorylation of the MARCKS homology domain by PKC reduces nuclear accumulation of DGK-zeta. In terms of tissue distribution, highest levels in brain, and substantial levels in skeletal muscle, heart, and pancreas. As to expression, predominantly expressed in muscle.

It is found in the nucleus. Its subcellular location is the cytoplasm. The protein localises to the cytosol. It localises to the cell membrane. The protein resides in the cell projection. It is found in the lamellipodium. It carries out the reaction a 1,2-diacyl-sn-glycerol + ATP = a 1,2-diacyl-sn-glycero-3-phosphate + ADP + H(+). It catalyses the reaction a 1-O-alkyl-sn-glycerol + ATP = a 1-O-alkyl-sn-glycero-3-phosphate + ADP + H(+). The catalysed reaction is 1-O-alkyl-2-acyl-sn-glycerol + ATP = 1-O-alkyl-2-acyl-sn-glycero-3-phosphate + ADP + H(+). The enzyme catalyses 1,2-didecanoyl-sn-glycerol + ATP = 1,2-didecanoyl-sn-glycero-3-phosphate + ADP + H(+). It carries out the reaction 1,2-ditetradecanoyl-sn-glycerol + ATP = 1,2-ditetradecanoyl-sn-glycero-3-phosphate + ADP + H(+). It catalyses the reaction 1-hexadecanoyl-2-(9Z-octadecenoyl)-sn-glycerol + ATP = 1-hexadecanoyl-2-(9Z-octadecenoyl)-sn-glycero-3-phosphate + ADP + H(+). The catalysed reaction is 1-hexadecanoyl-2-(5Z,8Z,11Z,14Z-eicosatetraenoyl)-sn-glycerol + ATP = 1-hexadecanoyl-2-(5Z,8Z,11Z,14Z-eicosatetraenoyl)-sn-glycero-3-phosphate + ADP + H(+). The enzyme catalyses 1-octadecanoyl-2-(9Z-octadecenoyl)-sn-glycerol + ATP = 1-octadecanoyl-2-(9Z-octadecenoyl)-sn-glycero-3-phosphate + ADP + H(+). It carries out the reaction 1-octadecanoyl-2-(5Z,8Z,11Z,14Z-eicosatetraenoyl)-sn-glycerol + ATP = 1-octadecanoyl-2-(5Z,8Z,11Z,14Z-eicosatetraenoyl)-sn-glycero-3-phosphate + ADP + H(+). It catalyses the reaction 1-octadecanoyl-2-(4Z,7Z,10Z,13Z,16Z,19Z-docosahexaenoyl)-sn-glycerol + ATP = 1-octadecanoyl-2-(4Z,7Z,10Z,13Z,16Z,19Z-docosahexaenoyl)-sn-glycero-3-phosphate + ADP + H(+). The catalysed reaction is 1,2-di-(9Z-octadecenoyl)-sn-glycerol + ATP = 1,2-di-(9Z-octadecenoyl)-sn-glycero-3-phosphate + ADP + H(+). The enzyme catalyses 1-(9Z-octadecenoyl)-2-hexadecanoyl-sn-glycerol + ATP = 1-(9Z)-octadecenoyl-2-hexadecanoyl-sn-glycero-3-phosphate + ADP + H(+). It carries out the reaction 1-eicosanoyl-2-(5Z,8Z,11Z,14Z)-eicosatetraenoyl-sn-glycerol + ATP = 1-eicosanoyl-2-(5Z,8Z,11Z,14Z)-eicosatetraenoyl-sn-glycero-3-phosphate + ADP + H(+). It catalyses the reaction 1,2-di-(5Z,8Z,11Z,14Z)-eicosatetraenoyl-sn-glycerol + ATP = 1,2-di-(5Z,8Z,11Z,14Z)-eicosatetraenoyl-sn-glycero-3-phosphate + ADP + H(+). The catalysed reaction is 1-O-hexadecyl-2-acetyl-sn-glycerol + ATP = 1-O-hexadecyl-2-acetyl-sn-glycero-3-phosphate + ADP + H(+). The enzyme catalyses 1-O-hexadecyl-2-(5Z,8Z,11Z,14Z-eicosatetraenoyl)-sn-glycerol + ATP = 1-O-hexadecyl-2-(5Z,8Z,11Z,14Z-eicosatetraenoyl)-sn-glycero-3-phosphate + ADP + H(+). It carries out the reaction 1-O-hexadecyl-2-(9Z-octadecenoyl)-sn-glycerol + ATP = 1-O-hexadecyl-2-(9Z-octadecenoyl)-sn-glycero-3-phosphate + ADP + H(+). It catalyses the reaction 1-O-hexadecyl-sn-glycerol + ATP = 1-O-hexadecyl-sn-glycero-3-phosphate + ADP + H(+). It functions in the pathway lipid metabolism; glycerolipid metabolism. Activated by 1,2-diacyl-sn-glycero-3-phosphate/phosphatidic acid irrespective of its acyl chain composition. Diacylglycerol kinase that converts diacylglycerol/DAG into phosphatidic acid/phosphatidate/PA and regulates the respective levels of these two bioactive lipids. Thereby, acts as a central switch between the signaling pathways activated by these second messengers with different cellular targets and opposite effects in numerous biological processes. Also plays an important role in the biosynthesis of complex lipids. Does not exhibit an acyl chain-dependent substrate specificity among diacylglycerol species. Can also phosphorylate 1-alkyl-2-acylglycerol in vitro but less efficiently and with a preference for alkylacylglycerols containing an arachidonoyl group. The biological processes it is involved in include T cell activation since it negatively regulates T-cell receptor signaling which is in part mediated by diacylglycerol. By generating phosphatidic acid, stimulates PIP5KIA activity which regulates actin polymerization. Through the same mechanism could also positively regulate insulin-induced translocation of SLC2A4 to the cell membrane. Functionally, regulates RASGRP1 activity. In terms of biological role, does not regulate RASGRP1 activity. The sequence is that of Diacylglycerol kinase zeta from Homo sapiens (Human).